A 199-amino-acid chain; its full sequence is Dephospho-CoA kinase (199 aa).

The DPCK domain maps to 3–199; sequence ILGLTGSIGM…EVVKMPQRRA (197 aa). Residue 11–16 participates in ATP binding; the sequence is GMGKST.

Belongs to the CoaE family.

The protein resides in the cytoplasm. It carries out the reaction 3'-dephospho-CoA + ATP = ADP + CoA + H(+). The protein operates within cofactor biosynthesis; coenzyme A biosynthesis; CoA from (R)-pantothenate: step 5/5. Its function is as follows. Catalyzes the phosphorylation of the 3'-hydroxyl group of dephosphocoenzyme A to form coenzyme A. The polypeptide is Dephospho-CoA kinase (Bradyrhizobium diazoefficiens (strain JCM 10833 / BCRC 13528 / IAM 13628 / NBRC 14792 / USDA 110)).